Here is a 184-residue protein sequence, read N- to C-terminus: Elongation factor P (184 aa).

It belongs to the elongation factor P family.

The protein resides in the cytoplasm. It functions in the pathway protein biosynthesis; polypeptide chain elongation. Its function is as follows. Involved in peptide bond synthesis. Stimulates efficient translation and peptide-bond synthesis on native or reconstituted 70S ribosomes in vitro. Probably functions indirectly by altering the affinity of the ribosome for aminoacyl-tRNA, thus increasing their reactivity as acceptors for peptidyl transferase. This Variovorax paradoxus (strain S110) protein is Elongation factor P.